The chain runs to 340 residues: MSEDMEVTNWGYTHISVKEFCYVWTIRNFSPCIDGIRRTITSPVFSLEANDEVTWCLIAHPNGVDEVSECYMSVFLELLSCRKSPVWAKYEFWITTSQGEKYQCMKSFNVHSFQKNQYRGFKKFILGDFLISHPRRFLPENKLTLCCKVSIVGSVFGMPGQNITPAIKDPRHLLTDDLGELWENSLFTDCCLLVAGHEFRAHKAILAARSPVFRAMFEHEMEERLGNPTEIHDLDPKVFKEMMGFIYTGKAPHLQSHSMATDVLTAADKYGLEGLKVLCEDALCRNLSVENAAQTLILADLHKREQLKTQALYFIALHASVVSETSEWKSMMETHPHLVG.

The 131-residue stretch at 19 to 149 (EFCYVWTIRN…ENKLTLCCKV (131 aa)) folds into the MATH domain. The region spanning 188–255 (TDCCLLVAGH…IYTGKAPHLQ (68 aa)) is the BTB domain.

Belongs to the Tdpoz family.

The sequence is that of TD and POZ domain-containing protein 5 from Mus musculus (Mouse).